The following is a 120-amino-acid chain: ATP-dependent Clp protease adapter protein ClpS (120 aa).

The disordered stretch occupies residues 1–20 (MATKSPVNPKVPLVQEPDRD).

The protein belongs to the ClpS family. Binds to the N-terminal domain of the chaperone ClpA.

In terms of biological role, involved in the modulation of the specificity of the ClpAP-mediated ATP-dependent protein degradation. In Albidiferax ferrireducens (strain ATCC BAA-621 / DSM 15236 / T118) (Rhodoferax ferrireducens), this protein is ATP-dependent Clp protease adapter protein ClpS.